Here is a 329-residue protein sequence, read N- to C-terminus: 4-methyl-2-oxopentanoate reductase A (329 aa).

NAD(+)-binding positions include 162–163, 240–242, and D266; these read GI and TAR. The active site involves R242. E271 is an active-site residue. The Proton donor role is filled by H289.

The protein belongs to the D-isomer specific 2-hydroxyacid dehydrogenase family.

The catalysed reaction is (2R)-hydroxy-4-methylpentanoate + NADP(+) = 4-methyl-2-oxopentanoate + NADPH + H(+). It carries out the reaction a (2R)-2-hydroxycarboxylate + NADP(+) = a 2-oxocarboxylate + NADPH + H(+). 4-methyl-2-oxopentanoate (MOA) reductase that reduces MOA, a possible intermediate in leucine synthesis, to D-leucate in a NADPH- or NADH-dependent manner, but with a preference for NADPH. In addition to MOA, shows broad substrate specificity toward 2-keto acids. This chain is 4-methyl-2-oxopentanoate reductase A, found in Aspergillus oryzae (strain ATCC 42149 / RIB 40) (Yellow koji mold).